A 75-amino-acid polypeptide reads, in one-letter code: Endogenous retrovirus group K member 7 Np9 protein (75 aa).

A disordered region spans residues 24–43 (PKRQRPSRTGHDDDGGFVEK). A compositionally biased stretch (basic and acidic residues) spans 32–43 (TGHDDDGGFVEK).

The protein resides in the nucleus. Its function is as follows. May possess a function in tumorigenesis. In Homo sapiens (Human), this protein is Endogenous retrovirus group K member 7 Np9 protein (ERVK-7).